Reading from the N-terminus, the 25-residue chain is MEFSPRAAELTTLLESRISNFYTNI.

Belongs to the ATPase alpha/beta chains family. In terms of assembly, F-type ATPases have 2 components, CF(1) - the catalytic core - and CF(0) - the membrane proton channel. CF(1) has five subunits: alpha(3), beta(3), gamma(1), delta(1), epsilon(1). CF(0) has three main subunits: a, b and c.

It is found in the mitochondrion. The protein resides in the mitochondrion inner membrane. Mitochondrial membrane ATP synthase (F(1)F(0) ATP synthase or Complex V) produces ATP from ADP in the presence of a proton gradient across the membrane which is generated by electron transport complexes of the respiratory chain. F-type ATPases consist of two structural domains, F(1) - containing the extramembraneous catalytic core, and F(0) - containing the membrane proton channel, linked together by a central stalk and a peripheral stalk. During catalysis, ATP synthesis in the catalytic domain of F(1) is coupled via a rotary mechanism of the central stalk subunits to proton translocation. Subunits alpha and beta form the catalytic core in F(1). Rotation of the central stalk against the surrounding alpha(3)beta(3) subunits leads to hydrolysis of ATP in three separate catalytic sites on the beta subunits. Subunit alpha does not bear the catalytic high-affinity ATP-binding sites. The polypeptide is ATP synthase subunit alpha, mitochondrial (ATPA) (Spinacia oleracea (Spinach)).